A 248-amino-acid polypeptide reads, in one-letter code: Small ribosomal subunit protein uS3 (248 aa).

The KH type-2 domain occupies 39–108 (IRKLVSQKLA…TVAVNVAEIP (70 aa)). Positions 212–248 (KTETLARPPRKSDERRREDGERPSRRRPTARRRPGGE) are disordered. Over residues 221-234 (RKSDERRREDGERP) the composition is skewed to basic and acidic residues. Positions 235–248 (SRRRPTARRRPGGE) are enriched in basic residues.

This sequence belongs to the universal ribosomal protein uS3 family. As to quaternary structure, part of the 30S ribosomal subunit. Forms a tight complex with proteins S10 and S14.

Functionally, binds the lower part of the 30S subunit head. Binds mRNA in the 70S ribosome, positioning it for translation. The protein is Small ribosomal subunit protein uS3 of Deinococcus geothermalis (strain DSM 11300 / CIP 105573 / AG-3a).